A 296-amino-acid polypeptide reads, in one-letter code: tRNA dimethylallyltransferase (296 aa).

Residue Gly-9–Thr-16 coordinates ATP. A substrate-binding site is contributed by Thr-11–Thr-16. Residues Asp-34–Gln-37 are interaction with substrate tRNA.

It belongs to the IPP transferase family. In terms of assembly, monomer. The cofactor is Mg(2+).

It catalyses the reaction adenosine(37) in tRNA + dimethylallyl diphosphate = N(6)-dimethylallyladenosine(37) in tRNA + diphosphate. In terms of biological role, catalyzes the transfer of a dimethylallyl group onto the adenine at position 37 in tRNAs that read codons beginning with uridine, leading to the formation of N6-(dimethylallyl)adenosine (i(6)A). This chain is tRNA dimethylallyltransferase, found in Chloroflexus aggregans (strain MD-66 / DSM 9485).